We begin with the raw amino-acid sequence, 318 residues long: Methionyl-tRNA formyltransferase (318 aa).

113 to 116 (SLLP) provides a ligand contact to (6S)-5,6,7,8-tetrahydrofolate.

It belongs to the Fmt family.

The enzyme catalyses L-methionyl-tRNA(fMet) + (6R)-10-formyltetrahydrofolate = N-formyl-L-methionyl-tRNA(fMet) + (6S)-5,6,7,8-tetrahydrofolate + H(+). In terms of biological role, attaches a formyl group to the free amino group of methionyl-tRNA(fMet). The formyl group appears to play a dual role in the initiator identity of N-formylmethionyl-tRNA by promoting its recognition by IF2 and preventing the misappropriation of this tRNA by the elongation apparatus. The sequence is that of Methionyl-tRNA formyltransferase from Hahella chejuensis (strain KCTC 2396).